Consider the following 135-residue polypeptide: DNA-binding protein H-NS homolog (135 aa).

A DNA-binding region spans residues 112-117; that stretch reads QGRTPS.

Belongs to the histone-like protein H-NS family. As to quaternary structure, homodimer that oligomerizes on DNA into higher-order complexes that form bridges between disparate regions of DNA compacting it.

Its subcellular location is the cytoplasm. It localises to the nucleoid. Its function is as follows. A DNA-binding protein implicated in transcriptional repression and chromosome organization and compaction. Binds nucleation sites in AT-rich DNA and bridges them, forming higher-order nucleoprotein complexes and condensing the chromosome. A subset of genes are repressed by H-NS in association with other proteins. In Buchnera aphidicola subsp. Acyrthosiphon pisum (strain APS) (Acyrthosiphon pisum symbiotic bacterium), this protein is DNA-binding protein H-NS homolog (hns).